Reading from the N-terminus, the 506-residue chain is Pisatin demethylase (506 aa).

Residue cysteine 453 coordinates heme.

The protein belongs to the cytochrome P450 family. Heme is required as a cofactor.

Its function is as follows. Can detoxify the phytoalexin pisatin from garden pea. Pisatin is an antimicrobial compound produced by pea in response to infection by plant pathogens. The sequence is that of Pisatin demethylase (PDA6-1) from Fusarium vanettenii (Neocosmospora pisi).